The primary structure comprises 394 residues: Enoyl-[acyl-carrier-protein] reductase [NADH] (394 aa).

Residues 48-53, 74-75, 111-112, and 139-140 each bind NAD(+); these read GASTGY, YE, DA, and LA. Position 225 (Tyr-225) interacts with substrate. Tyr-235 functions as the Proton donor in the catalytic mechanism. NAD(+) is bound by residues Lys-244 and 273 to 275; that span reads LVT.

Belongs to the TER reductase family. As to quaternary structure, monomer.

It carries out the reaction a 2,3-saturated acyl-[ACP] + NAD(+) = a (2E)-enoyl-[ACP] + NADH + H(+). Its pathway is lipid metabolism; fatty acid biosynthesis. Its function is as follows. Involved in the final reduction of the elongation cycle of fatty acid synthesis (FAS II). Catalyzes the reduction of a carbon-carbon double bond in an enoyl moiety that is covalently linked to an acyl carrier protein (ACP). The chain is Enoyl-[acyl-carrier-protein] reductase [NADH] from Opitutus terrae (strain DSM 11246 / JCM 15787 / PB90-1).